The sequence spans 241 residues: DnaJ homolog subfamily B member 6 (241 aa).

Positions 2-146 (VDYYEVLGVQ…TGSFFSAFSG (145 aa)) are interaction with HSP70. The J domain maps to 3-69 (DYYEVLGVQR…KKRDIYDKYG (67 aa)). The tract at residues 119-241 (FEDFFGNRRG…KEQLLRLDNK (123 aa)) is interaction with KRT18. An Omega-N-methylarginine modification is found at Arg-135.

As to quaternary structure, homooligomer. Interacts with BAG3, HSPB8 and STUB1. Interacts with ALKBH1. Interacts with HSP70, KRT18 and PTTG.

The protein resides in the cytoplasm. The protein localises to the perinuclear region. It localises to the nucleus. It is found in the myofibril. Its subcellular location is the sarcomere. The protein resides in the z line. Has a stimulatory effect on the ATPase activity of HSP70 in a dose-dependent and time-dependent manner and hence acts as a co-chaperone of HSP70. Plays an indispensable role in the organization of KRT8/KRT18 filaments. Acts as an endogenous molecular chaperone for neuronal proteins including huntingtin. Suppresses aggregation and toxicity of polyglutamine-containing, aggregation-prone proteins. Also reduces cellular toxicity and caspase-3 activity. The sequence is that of DnaJ homolog subfamily B member 6 from Macaca fascicularis (Crab-eating macaque).